The chain runs to 347 residues: NADH-ubiquinone oxidoreductase chain 2 (347 aa).

11 consecutive transmembrane segments (helical) span residues 3 to 23 (PLIF…VMTT), 25 to 45 (HWVM…PILM), 59 to 79 (YFLT…INLT), 96 to 116 (IIMT…FWVP), 122 to 142 (VQLS…MSIL), 149 to 169 (INLD…GWGG), 178 to 198 (ILAY…VYNP), 201 to 221 (ALLN…MLMV), 237 to 257 (MPLL…LPPL), 274 to 294 (DSMI…YFYM), and 326 to 346 (LSPL…LALL).

It belongs to the complex I subunit 2 family. As to quaternary structure, core subunit of respiratory chain NADH dehydrogenase (Complex I) which is composed of 45 different subunits. Interacts with TMEM242.

It localises to the mitochondrion inner membrane. It catalyses the reaction a ubiquinone + NADH + 5 H(+)(in) = a ubiquinol + NAD(+) + 4 H(+)(out). Core subunit of the mitochondrial membrane respiratory chain NADH dehydrogenase (Complex I) which catalyzes electron transfer from NADH through the respiratory chain, using ubiquinone as an electron acceptor. Essential for the catalytic activity and assembly of complex I. The polypeptide is NADH-ubiquinone oxidoreductase chain 2 (Nyctimene aello (Broad-striped tube-nosed fruit bat)).